We begin with the raw amino-acid sequence, 195 residues long: Protein lin-28 homolog A (195 aa).

A CSD domain is found at 33-106 (QGSGVCKWFN…GLESTQVTGP (74 aa)). Residues 98-127 (LESTQVTGPGGAPCIGSERRPKVKGQQKRR) form a disordered region. Residues 107 to 130 (GGAPCIGSERRPKVKGQQKRRQRG) are flexible linker. Positions 118–127 (PKVKGQQKRR) are enriched in basic residues. CCHC-type zinc fingers lie at residues 131–148 (DRCY…ECKL) and 153–170 (KKCH…QCPE). The Zn(2+) site is built by Cys-133, Cys-136, His-141, Cys-146, Cys-155, Cys-158, His-163, and Cys-168.

It belongs to the lin-28 family. As to quaternary structure, monomer.

Its subcellular location is the cytoplasm. It is found in the rough endoplasmic reticulum. The protein resides in the P-body. It localises to the stress granule. The protein localises to the nucleus. Its subcellular location is the nucleolus. Its function is as follows. RNA-binding protein that inhibits processing of pre-let-7 miRNAs and regulates translation of mRNAs that control developmental timing, pluripotency and metabolism. Seems to recognize a common structural G-quartet (G4) feature in its miRNA and mRNA targets. 'Translational enhancer' that drives specific mRNAs to polysomes and increases the efficiency of protein synthesis. Its association with the translational machinery and target mRNAs results in an increased number of initiation events per molecule of mRNA and, indirectly, in mRNA stabilization. Suppressor of microRNA (miRNA) biogenesis, including that of let-7. Binds specific target miRNA precursors (pre-miRNAs), recognizing an 5'-GGAG-3' motif found in their terminal loop, and recruits uridylyltransferase. This results in the terminal uridylation of target pre-miRNAs. Uridylated pre-miRNAs fail to be processed by Dicer and undergo degradation. Localized to the periendoplasmic reticulum area, binds to a large number of spliced mRNAs and inhibits the translation of mRNAs destined for the ER, reducing the synthesis of transmembrane proteins, ER or Golgi lumen proteins, and secretory proteins. Binds to and enhances the translation of mRNAs for several metabolic enzymes, increasing glycolysis and oxidative phosphorylation. Which, with the let-7 repression may enhance tissue repair in adult tissue. This Xenopus laevis (African clawed frog) protein is Protein lin-28 homolog A (lin28a).